We begin with the raw amino-acid sequence, 86 residues long: MMKIIIFLIVSSLVLIGVKTDNGYLLDKYTGCKVWCVINNESCNSECKIRRGNYGYCYFWKLACYCEGAPKSELWHYETNKCNGRM.

Residues 1 to 20 (MMKIIIFLIVSSLVLIGVKT) form the signal peptide. The 63-residue stretch at 21–83 (DNGYLLDKYT…LWHYETNKCN (63 aa)) folds into the LCN-type CS-alpha/beta domain. 4 cysteine pairs are disulfide-bonded: cysteine 32/cysteine 82, cysteine 36/cysteine 57, cysteine 43/cysteine 64, and cysteine 47/cysteine 66.

Expressed by the venom gland.

Its subcellular location is the secreted. Its function is as follows. Inhibits sodium channels (Nav). Also moderately inhibits human calcium-activated potassium channel KCa1.1/KCNMA1/BK (41.9% decrease at 2 uM toxin concentration). Shows moderate antimicrobial activity against both Gram-positive and -negative bacteria. This is MeuNaTxbeta-1 from Mesobuthus eupeus (Lesser Asian scorpion).